A 189-amino-acid chain; its full sequence is SAGA-associated factor 11 homolog (189 aa).

The SGF11-type zinc finger occupies 94–115; that stretch reads CTCPNCDRLVAATRFAPHLEKC. The tract at residues 128–189 is disordered; it reads RRLATKEGSS…GSKKNNGKTF (62 aa). Residues 136–145 show a composition bias toward low complexity; that stretch reads SSASSTSTST. S165 is modified (phosphoserine). Residues 175 to 189 are compositionally biased toward low complexity; it reads NSRNNGSKKNNGKTF.

This sequence belongs to the SGF11 family. As to quaternary structure, component of some SAGA transcription coactivator-HAT complexes, at least composed of Ada2b, not/nonstop, Pcaf/Gcn5, Sgf11 and Spt3. Within the SAGA complex, Sgf11, e(y)2, and not/nonstop form an additional subcomplex of SAGA called the DUB module (deubiquitination module). Interacts directly with not/nonstop. Interacts with the AMEX complex component xmas-2. Interacts with Cbp80; important for promoter recruitment of Sgf11 that is not associated with the DUB module.

The protein resides in the nucleus. It is found in the nucleoplasm. Its subcellular location is the cytoplasm. Component of the transcription regulatory histone acetylation (HAT) complex SAGA, a multiprotein complex that activates transcription by remodeling chromatin and mediating histone acetylation and deubiquitination. Within the SAGA complex, participates in a subcomplex that specifically deubiquitinates histone H2B. The SAGA complex is recruited to specific gene promoters by activators, where it is required for transcription. Required for nuclear receptor-mediated transactivation. Binds independently on SAGA to promoters in an RNA-dependent manner. Binds to mRNA and is essential for total mRNA export from the nucleus. Required to counteract heterochromatin silencing. Controls the development of neuronal connectivity in visual system by being required for accurate axon targeting in the optic lobe. Required for expression of ecdysone-induced genes such as br/broad. The polypeptide is SAGA-associated factor 11 homolog (Drosophila virilis (Fruit fly)).